A 153-amino-acid chain; its full sequence is Mitochondrial fission 1 protein (153 aa).

Residues 1–124 lie on the Cytoplasmic side of the membrane; it reads MTQLPYAVDA…LIDDKVTKEG (124 aa). A TPR repeat occupies 73–106; it reads RECLYYLALGNYKLGNYAQARKYNDALLENEPAN. A helical membrane pass occupies residues 125–145; the sequence is LMGVAIISGVAVAAGVIGGVL. At 146-153 the chain is on the mitochondrial intermembrane side; the sequence is LRNLGRKR.

This sequence belongs to the FIS1 family.

The protein localises to the mitochondrion outer membrane. In terms of biological role, has a role in mitochondrial fission. Has a role in outer membrane fission but not matrix separation. The polypeptide is Mitochondrial fission 1 protein (mtp-2) (Neurospora crassa (strain ATCC 24698 / 74-OR23-1A / CBS 708.71 / DSM 1257 / FGSC 987)).